A 64-amino-acid chain; its full sequence is Large ribosomal subunit protein bL28 (64 aa).

The tract at residues 1–23 (MARKDQISHRGPLSGNNRSHALN) is disordered.

This sequence belongs to the bacterial ribosomal protein bL28 family.

This chain is Large ribosomal subunit protein bL28, found in Mesomycoplasma hyopneumoniae (strain J / ATCC 25934 / NCTC 10110) (Mycoplasma hyopneumoniae).